The sequence spans 249 residues: Probable transcriptional regulatory protein Tgr7_2237 (249 aa).

The protein belongs to the TACO1 family.

The protein localises to the cytoplasm. The sequence is that of Probable transcriptional regulatory protein Tgr7_2237 from Thioalkalivibrio sulfidiphilus (strain HL-EbGR7).